Consider the following 221-residue polypeptide: Small ribosomal subunit protein uS3 (221 aa).

The region spanning 39–108 (IRKFVKKELF…NILINIVEVK (70 aa)) is the KH type-2 domain.

Belongs to the universal ribosomal protein uS3 family. As to quaternary structure, part of the 30S ribosomal subunit. Forms a tight complex with proteins S10 and S14.

Binds the lower part of the 30S subunit head. Binds mRNA in the 70S ribosome, positioning it for translation. This Clostridium botulinum (strain Alaska E43 / Type E3) protein is Small ribosomal subunit protein uS3.